The chain runs to 302 residues: Negative regulator of the PHO system (302 aa).

In terms of domain architecture, Protein kinase spans 6–296; that stretch reads FKQLEKLGNG…AKQALLHPWF (291 aa). ATP is bound by residues 12–20 and Lys-35; that span reads LGNGTYATV. Asp-132 acts as the Proton acceptor in catalysis.

This sequence belongs to the protein kinase superfamily. CMGC Ser/Thr protein kinase family. CDC2/CDKX subfamily. Interacts with a number of cyclins.

The enzyme catalyses L-seryl-[protein] + ATP = O-phospho-L-seryl-[protein] + ADP + H(+). It carries out the reaction L-threonyl-[protein] + ATP = O-phospho-L-threonyl-[protein] + ADP + H(+). When phosphate concentrations are high it phosphorylates the PHO4 transcription factor thus establishing repression. The sequence is that of Negative regulator of the PHO system (PHO85) from Candida glabrata (strain ATCC 2001 / BCRC 20586 / JCM 3761 / NBRC 0622 / NRRL Y-65 / CBS 138) (Yeast).